The following is a 3661-amino-acid chain: Serine/threonine-protein kinase SMG1 (3661 aa).

Positions 1-11 (MSRRAPGSRLS) are enriched in low complexity. Disordered stretches follow at residues 1–101 (MSRR…TYGR) and 116–144 (PEFTSVQHGSRALATKDMRKSQERSMSYS). The interaction with SMG8 and SMG9 stretch occupies residues 1-1977 (MSRRAPGSRL…GVLLQQHMYV (1977 aa)). The span at 26-35 (NDWQPRTDSA) shows a compositional bias: polar residues. Basic and acidic residues-rich tracts occupy residues 69-86 (QRHDDTRVHADIQNDEKG) and 129-138 (ATKDMRKSQE). K173 carries the N6-acetyllysine modification. Polar residues predominate over residues 1154-1165 (RNSASPKHSLNG). The segment at 1154–1175 (RNSASPKHSLNGESRKTVLSKP) is disordered. Positions 1283-1866 (RELQKSIEVQ…LYPAIVGTIS (584 aa)) constitute an FAT domain. One copy of the HEAT repeat lies at 1817 to 1852 (APWRGIIPQLFSRLNHPEVYVRQSICNLLCRVAQDS). The segment at 1898-1919 (ECEGGSPPASQDSNKDEPKSGL) is disordered. The region spanning 2124–2463 (VGGTITILPT…MEREITRSLF (340 aa)) is the PI3K/PI4K catalytic domain. The tract at residues 2130–2136 (ILPTKTK) is G-loop. A catalytic loop region spans residues 2332-2340 (GLGDRHLDN). Residues 2352–2376 (HIDYNVCFEKGKSLRVPEKVPFRMT) form an activation loop region. Position 3550 is a phosphothreonine (T3550). Phosphoserine is present on residues S3556 and S3570. A compositionally biased stretch (polar residues) spans 3568-3579 (ATSADTPPSTVP). Residues 3568–3591 (ATSADTPPSTVPGTGKSVACSPKK) are disordered. Phosphothreonine is present on residues T3573 and T3577. Positions 3629–3661 (RRMSVAEQVDYVIKEATNLDNLAQLYEGWTAWV) constitute an FATC domain.

The protein belongs to the PI3/PI4-kinase family. Component of the SMG1C complex composed of SMG1, SMG8 and SMG9; the recruitment of SMG8 to SMG1 N-terminus induces a large conformational change in the SMG1 C-terminal head domain containing the catalytic domain. Component of the transient SURF (SMG1-UPF1-eRF1-eRF3) complex. Part of a complex composed of SMG1, DHX34 and UPF1; within the complex DHX34 acts as a scaffolding protein to facilitate SMG1 phosphorylation of UPF1. Interacts with PRKCI. Interacts with TELO2 and TTI1. Interacts with RUVBL1 and RUVBL2. Interacts with UPF2. Interacts with DHX34 (via C-terminus); the interaction is RNA-independent. Requires Mn(2+) as cofactor. In terms of processing, autophosphorylated. As to expression, widely expressed, with highest level in heart and skeletal muscle. Expressed in placenta, brain, lung and spleen, but not in liver.

Its subcellular location is the nucleus. It is found in the cytoplasm. The enzyme catalyses L-seryl-[protein] + ATP = O-phospho-L-seryl-[protein] + ADP + H(+). It catalyses the reaction L-threonyl-[protein] + ATP = O-phospho-L-threonyl-[protein] + ADP + H(+). Inhibited by caffeine, LY294002 and wortmannin. Serine/threonine protein kinase involved in both mRNA surveillance and genotoxic stress response pathways. Recognizes the substrate consensus sequence [ST]-Q. Plays a central role in nonsense-mediated decay (NMD) of mRNAs containing premature stop codons by phosphorylating UPF1/RENT1. Recruited by release factors to stalled ribosomes together with SMG8 and SMG9 (forming the SMG1C protein kinase complex), and UPF1 to form the transient SURF (SMG1-UPF1-eRF1-eRF3) complex. In EJC-dependent NMD, the SURF complex associates with the exon junction complex (EJC) through UPF2 and allows the formation of an UPF1-UPF2-UPF3 surveillance complex which is believed to activate NMD. Also acts as a genotoxic stress-activated protein kinase that displays some functional overlap with ATM. Can phosphorylate p53/TP53 and is required for optimal p53/TP53 activation after cellular exposure to genotoxic stress. Its depletion leads to spontaneous DNA damage and increased sensitivity to ionizing radiation (IR). May activate PRKCI but not PRKCZ. This chain is Serine/threonine-protein kinase SMG1, found in Homo sapiens (Human).